The sequence spans 53 residues: uncharacterized protein (53 aa).

It belongs to the ELIP/psbS family.

It localises to the plastid. The protein resides in the chloroplast. Possible role in chlorophyll and/or carotenoid binding. This is an uncharacterized protein from Guillardia theta (Cryptophyte).